We begin with the raw amino-acid sequence, 138 residues long: Putative pre-16S rRNA nuclease (138 aa).

The protein belongs to the YqgF nuclease family.

The protein localises to the cytoplasm. Could be a nuclease involved in processing of the 5'-end of pre-16S rRNA. The protein is Putative pre-16S rRNA nuclease of Clostridium beijerinckii (strain ATCC 51743 / NCIMB 8052) (Clostridium acetobutylicum).